We begin with the raw amino-acid sequence, 158 residues long: GAF domain-containing protein A (158 aa).

One can recognise a GAF domain in the interval 32–158; sequence NQIANLANVT…LTQILKLLDN (127 aa).

The protein belongs to the free Met sulfoxide reductase family.

The protein is GAF domain-containing protein A (gafA) of Dictyostelium discoideum (Social amoeba).